A 382-amino-acid chain; its full sequence is Leucine carboxyl methyltransferase 1 (382 aa).

Polar residues predominate over residues 1–11 (MSAPQIPNLNT). The tract at residues 1–45 (MSAPQIPNLNTLRRGGGRGRFRARGGPDSSSSSGNKDRVVQGTDN) is disordered. Residues arginine 88, glycine 121, aspartate 146, 193-194 (DL), and glutamate 230 contribute to the S-adenosyl-L-methionine site.

It belongs to the methyltransferase superfamily. LCMT family.

The catalysed reaction is [phosphatase 2A protein]-C-terminal L-leucine + S-adenosyl-L-methionine = [phosphatase 2A protein]-C-terminal L-leucine methyl ester + S-adenosyl-L-homocysteine. Functionally, methylates the carboxyl group of the C-terminal leucine residue of protein phosphatase 2A catalytic subunits to form alpha-leucine ester residues. In Emericella nidulans (strain FGSC A4 / ATCC 38163 / CBS 112.46 / NRRL 194 / M139) (Aspergillus nidulans), this protein is Leucine carboxyl methyltransferase 1 (ppm1).